A 144-amino-acid chain; its full sequence is Putative pre-16S rRNA nuclease (144 aa).

It belongs to the YqgF nuclease family.

The protein localises to the cytoplasm. Functionally, could be a nuclease involved in processing of the 5'-end of pre-16S rRNA. The chain is Putative pre-16S rRNA nuclease from Chlorobium phaeobacteroides (strain BS1).